The chain runs to 284 residues: Diaminopimelate epimerase (284 aa).

3 residues coordinate substrate: Asn20, Gln53, and Asn73. Residue Cys82 is the Proton donor of the active site. Residues 83-84 (GN), Asn167, Asn200, and 218-219 (ER) each bind substrate. Catalysis depends on Cys227, which acts as the Proton acceptor. 228–229 (GS) contacts substrate.

Belongs to the diaminopimelate epimerase family. Homodimer.

It localises to the cytoplasm. It catalyses the reaction (2S,6S)-2,6-diaminopimelate = meso-2,6-diaminopimelate. The protein operates within amino-acid biosynthesis; L-lysine biosynthesis via DAP pathway; DL-2,6-diaminopimelate from LL-2,6-diaminopimelate: step 1/1. Its function is as follows. Catalyzes the stereoinversion of LL-2,6-diaminopimelate (L,L-DAP) to meso-diaminopimelate (meso-DAP), a precursor of L-lysine and an essential component of the bacterial peptidoglycan. The chain is Diaminopimelate epimerase from Xylella fastidiosa (strain M23).